The chain runs to 338 residues: Lipoate-protein ligase A (338 aa).

In terms of domain architecture, BPL/LPL catalytic spans 29 to 216 (PTTQRVLFLW…AFFDYFGEQC (188 aa)). Residues arginine 71, 76–79 (GAVF), and lysine 134 each bind ATP. Lysine 134 serves as a coordination point for (R)-lipoate.

The protein belongs to the LplA family. Monomer.

It localises to the cytoplasm. The enzyme catalyses L-lysyl-[lipoyl-carrier protein] + (R)-lipoate + ATP = N(6)-[(R)-lipoyl]-L-lysyl-[lipoyl-carrier protein] + AMP + diphosphate + H(+). It functions in the pathway protein modification; protein lipoylation via exogenous pathway; protein N(6)-(lipoyl)lysine from lipoate: step 1/2. It participates in protein modification; protein lipoylation via exogenous pathway; protein N(6)-(lipoyl)lysine from lipoate: step 2/2. Functionally, catalyzes both the ATP-dependent activation of exogenously supplied lipoate to lipoyl-AMP and the transfer of the activated lipoyl onto the lipoyl domains of lipoate-dependent enzymes. This Pectobacterium carotovorum subsp. carotovorum (strain PC1) protein is Lipoate-protein ligase A.